The chain runs to 411 residues: uncharacterized protein (411 aa).

The first 21 residues, 1–21, serve as a signal peptide directing secretion; it reads MHSRILLLLLMFAFNVGLINC. One can recognise an EGF-like domain in the interval 28–67; it reads PQSNCKIRCENGGMCVFDLERPDFHSCICLLGVYTGDRCQ. 3 cysteine pairs are disulfide-bonded: C32–C42, C36–C54, and C56–C66. Over residues 78–97 the composition is skewed to polar residues; the sequence is TATSDETSHPMNIQHQQSQA. Disordered regions lie at residues 78–312 and 337–375; these read TATS…EPIR and HPIE…EYGM. A compositionally biased stretch (basic and acidic residues) spans 100-230; the sequence is DDARRRDDER…VEKELNDKRT (131 aa). Residues 237 to 266 show a composition bias toward acidic residues; it reads FEYEGGDEEYPQVAEKEDEYDEGYETDNTE. Residues 267–276 show a composition bias toward low complexity; the sequence is DVTITTTKTT.

This is an uncharacterized protein from Caenorhabditis elegans.